The chain runs to 101 residues: Small ribosomal subunit protein uS14 (101 aa).

It belongs to the universal ribosomal protein uS14 family. As to quaternary structure, part of the 30S ribosomal subunit. Contacts proteins S3 and S10.

Functionally, binds 16S rRNA, required for the assembly of 30S particles and may also be responsible for determining the conformation of the 16S rRNA at the A site. This is Small ribosomal subunit protein uS14 from Haemophilus ducreyi (strain 35000HP / ATCC 700724).